We begin with the raw amino-acid sequence, 497 residues long: COP9 signalosome complex subunit 3 (497 aa).

Residues 233–408 (QAFDAFERCV…DGSPAYLTFL (176 aa)) form the PCI domain.

It belongs to the CSN3 family. As to quaternary structure, component of the COP9 signalosome (CSN) complex.

It is found in the cytoplasm. It localises to the nucleus. Functionally, component of the COP9 signalosome (CSN) complex that acts as an regulator of the ubiquitin (Ubl) conjugation pathway by mediating the deneddylation of the cullin subunit of SCF-type E3 ubiquitin-protein ligase complexes. The CSN complex is involved in the regulation of the circadian clock through its control of the stability of the SCF(FWD1) complex. The chain is COP9 signalosome complex subunit 3 (csn-3) from Neurospora crassa (strain ATCC 24698 / 74-OR23-1A / CBS 708.71 / DSM 1257 / FGSC 987).